We begin with the raw amino-acid sequence, 606 residues long: Protein couch potato (606 aa).

Residues I81–Q105 carry the Nuclear localization signal motif. Tandem repeats lie at residues P91–P95, A109–L113, P114–P118, P122–P126, P128–P132, P134–K138, and P159–P163. The 7 X 5 AA approximate repeats of P-V-S-V-P stretch occupies residues P91–H164. 4 disordered regions span residues Q147–H166, Q282–A311, V324–A365, and P388–S410. Over residues S344 to A365 the composition is skewed to low complexity. Positions R442 to S524 constitute an RRM domain.

As to expression, expressed in neural precursors and their daughter cells in the embryonic peripheral nervous system. Less abundant in a number of glial cells in the peripheral and central nervous systems and also present at low levels in the developing gut.

Its subcellular location is the nucleus. Functionally, may play a role in the development or function of the peripheral nervous system by regulating the processing of nervous system-specific transcripts. The polypeptide is Protein couch potato (cpo) (Drosophila melanogaster (Fruit fly)).